Consider the following 504-residue polypeptide: Protein psiD (504 aa).

The first 21 residues, 1–21 (MKYSYLLLILLLSNLYKEGFS), serve as a signal peptide directing secretion. Asparagine 87, asparagine 136, asparagine 236, asparagine 252, asparagine 290, and asparagine 373 each carry an N-linked (GlcNAc...) asparagine glycan. One can recognise a PA14 domain in the interval 111–251 (LTRVGDSTYA…YDACGVCDGH (141 aa)). The span at 417-430 (TVTPTVTPTVTPTP) shows a compositional bias: low complexity. Residues 417–453 (TVTPTVTPTVTPTPTTTPTPSPTTVPPRPTPTPLPAD) form a disordered region. The span at 431-453 (TTTPTPSPTTVPPRPTPTPLPAD) shows a compositional bias: pro residues. Residue asparagine 483 is glycosylated (N-linked (GlcNAc...) asparagine).

The protein belongs to the prespore-cell-inducing factor family.

It localises to the secreted. The chain is Protein psiD (psiD) from Dictyostelium discoideum (Social amoeba).